Reading from the N-terminus, the 426-residue chain is 3-phosphoshikimate 1-carboxyvinyltransferase (426 aa).

Lysine 21, serine 22, and arginine 26 together coordinate 3-phosphoshikimate. Residue lysine 21 coordinates phosphoenolpyruvate. Glycine 91 and arginine 119 together coordinate phosphoenolpyruvate. Positions 162, 163, 164, 190, 304, and 331 each coordinate 3-phosphoshikimate. Glutamine 164 is a phosphoenolpyruvate binding site. Aspartate 304 functions as the Proton acceptor in the catalytic mechanism. Phosphoenolpyruvate is bound by residues arginine 335, arginine 377, and lysine 403.

Belongs to the EPSP synthase family. As to quaternary structure, monomer.

Its subcellular location is the cytoplasm. It carries out the reaction 3-phosphoshikimate + phosphoenolpyruvate = 5-O-(1-carboxyvinyl)-3-phosphoshikimate + phosphate. The protein operates within metabolic intermediate biosynthesis; chorismate biosynthesis; chorismate from D-erythrose 4-phosphate and phosphoenolpyruvate: step 6/7. In terms of biological role, catalyzes the transfer of the enolpyruvyl moiety of phosphoenolpyruvate (PEP) to the 5-hydroxyl of shikimate-3-phosphate (S3P) to produce enolpyruvyl shikimate-3-phosphate and inorganic phosphate. The polypeptide is 3-phosphoshikimate 1-carboxyvinyltransferase (Clostridium kluyveri (strain ATCC 8527 / DSM 555 / NBRC 12016 / NCIMB 10680 / K1)).